The primary structure comprises 145 residues: D-aminoacyl-tRNA deacylase (145 aa).

Residues 137 to 138 carry the Gly-cisPro motif, important for rejection of L-amino acids motif; that stretch reads GP.

The protein belongs to the DTD family. Homodimer.

It is found in the cytoplasm. The enzyme catalyses glycyl-tRNA(Ala) + H2O = tRNA(Ala) + glycine + H(+). The catalysed reaction is a D-aminoacyl-tRNA + H2O = a tRNA + a D-alpha-amino acid + H(+). In terms of biological role, an aminoacyl-tRNA editing enzyme that deacylates mischarged D-aminoacyl-tRNAs. Also deacylates mischarged glycyl-tRNA(Ala), protecting cells against glycine mischarging by AlaRS. Acts via tRNA-based rather than protein-based catalysis; rejects L-amino acids rather than detecting D-amino acids in the active site. By recycling D-aminoacyl-tRNA to D-amino acids and free tRNA molecules, this enzyme counteracts the toxicity associated with the formation of D-aminoacyl-tRNA entities in vivo and helps enforce protein L-homochirality. This chain is D-aminoacyl-tRNA deacylase, found in Dinoroseobacter shibae (strain DSM 16493 / NCIMB 14021 / DFL 12).